Reading from the N-terminus, the 225-residue chain is Dynein axonemal assembly factor 19 (225 aa).

The stretch at 8–32 (DFRELERELANALAADQKYSRENDA) forms a coiled coil.

This sequence belongs to the DNAAF19/PR46b family. In terms of assembly, homodimer.

It localises to the cytoplasm. The protein localises to the cell projection. The protein resides in the cilium. It is found in the flagellum. Functionally, dynein-attachment factor required for cilia motility. The polypeptide is Dynein axonemal assembly factor 19 (dnaaf19) (Xenopus tropicalis (Western clawed frog)).